The following is a 353-amino-acid chain: MTIALGTFTKEENDLFDIMDDWLRRDRFVFVGWSGLLLFPCAYFALGGWFTGTTFVTSWYTHGLASSYLEGCNFLTAAVSTPANSLAHSLLLLWGPEAQGDFTRWCQLGGLWTFVALHGAFGLIGFMLRQFELARSVQLRPYNAIAFSGPIAVFVSVFLIYPLGQSGWFFAPSFGVAAIFRFILFFQGFHNWTLNPFHMMGVAGVLGAALLCAIHGATVENTLFEDGDGANTFRAFNPTQAEETYSMVTANRFWSQIFGVAFSNKRWLHFFMLFVPVTGLWMSAIGVVGLALNLRAYDFVSQEIRAAEDPEFETFYTKNILLNEGIRAWMAAQDQPHENLIFPEEVLPRGNAL.

Residue Thr2 is modified to N-acetylthreonine. A Phosphothreonine modification is found at Thr2. Residues 41-61 (CAYFALGGWFTGTTFVTSWYT) traverse the membrane as a helical segment. His118 lines the chlorophyll a pocket. Residues 125–141 (GFMLRQFELARSVQLRP) traverse the membrane as a helical segment. Positions 130 and 143 each coordinate pheophytin a. The helical transmembrane segment at 153 to 166 (VFVSVFLIYPLGQS) threads the bilayer. Position 198 (His198) interacts with chlorophyll a. A helical transmembrane segment spans residues 208-228 (AALLCAIHGATVENTLFEDGD). A plastoquinone-binding residues include His215 and Phe262. A Fe cation-binding site is contributed by His215. His269 lines the Fe cation pocket. The chain crosses the membrane as a helical span at residues 279–295 (GLWMSAIGVVGLALNLR).

This sequence belongs to the reaction center PufL/M/PsbA/D family. PSII is composed of 1 copy each of membrane proteins PsbA, PsbB, PsbC, PsbD, PsbE, PsbF, PsbH, PsbI, PsbJ, PsbK, PsbL, PsbM, PsbT, PsbX, PsbY, PsbZ, Psb30/Ycf12, at least 3 peripheral proteins of the oxygen-evolving complex and a large number of cofactors. It forms dimeric complexes. The D1/D2 heterodimer binds P680, chlorophylls that are the primary electron donor of PSII, and subsequent electron acceptors. It shares a non-heme iron and each subunit binds pheophytin, quinone, additional chlorophylls, carotenoids and lipids. There is also a Cl(-1) ion associated with D1 and D2, which is required for oxygen evolution. The PSII complex binds additional chlorophylls, carotenoids and specific lipids. is required as a cofactor.

It is found in the plastid. The protein localises to the chloroplast thylakoid membrane. It catalyses the reaction 2 a plastoquinone + 4 hnu + 2 H2O = 2 a plastoquinol + O2. Its function is as follows. Photosystem II (PSII) is a light-driven water:plastoquinone oxidoreductase that uses light energy to abstract electrons from H(2)O, generating O(2) and a proton gradient subsequently used for ATP formation. It consists of a core antenna complex that captures photons, and an electron transfer chain that converts photonic excitation into a charge separation. The D1/D2 (PsbA/PsbD) reaction center heterodimer binds P680, the primary electron donor of PSII as well as several subsequent electron acceptors. D2 is needed for assembly of a stable PSII complex. In Drimys granadensis, this protein is Photosystem II D2 protein.